A 258-amino-acid chain; its full sequence is Ribonuclease HII (258 aa).

Positions 71 to 258 (QLIAGIDEVG…PIKTMVNFKS (188 aa)) constitute an RNase H type-2 domain. Asp-77, Glu-78, and Asp-169 together coordinate a divalent metal cation.

It belongs to the RNase HII family. Mn(2+) is required as a cofactor. It depends on Mg(2+) as a cofactor.

The protein localises to the cytoplasm. It carries out the reaction Endonucleolytic cleavage to 5'-phosphomonoester.. Endonuclease that specifically degrades the RNA of RNA-DNA hybrids. The sequence is that of Ribonuclease HII (rnhB) from Lactococcus lactis subsp. lactis (strain IL1403) (Streptococcus lactis).